A 215-amino-acid chain; its full sequence is tRNA (guanine-N(7)-)-methyltransferase (215 aa).

4 residues coordinate S-adenosyl-L-methionine: Glu-44, Glu-69, Asp-96, and Asp-118. The active site involves Asp-118. Substrate-binding positions include Lys-122, Asp-154, and Thr-191–Glu-194.

Belongs to the class I-like SAM-binding methyltransferase superfamily. TrmB family.

It carries out the reaction guanosine(46) in tRNA + S-adenosyl-L-methionine = N(7)-methylguanosine(46) in tRNA + S-adenosyl-L-homocysteine. The protein operates within tRNA modification; N(7)-methylguanine-tRNA biosynthesis. Its function is as follows. Catalyzes the formation of N(7)-methylguanine at position 46 (m7G46) in tRNA. The sequence is that of tRNA (guanine-N(7)-)-methyltransferase from Exiguobacterium sp. (strain ATCC BAA-1283 / AT1b).